A 240-amino-acid polypeptide reads, in one-letter code: UDP-2,3-diacylglucosamine hydrolase (240 aa).

Mn(2+) contacts are provided by Asp-7, His-9, Asp-40, Asn-78, and His-113. Residue Asn-78–Arg-79 participates in substrate binding. 5 residues coordinate substrate: Asp-121, Ser-159, Thr-163, Lys-166, and His-194. Residues His-194 and His-196 each contribute to the Mn(2+) site.

This sequence belongs to the LpxH family. It depends on Mn(2+) as a cofactor.

Its subcellular location is the cell inner membrane. The catalysed reaction is UDP-2-N,3-O-bis[(3R)-3-hydroxytetradecanoyl]-alpha-D-glucosamine + H2O = 2-N,3-O-bis[(3R)-3-hydroxytetradecanoyl]-alpha-D-glucosaminyl 1-phosphate + UMP + 2 H(+). The protein operates within glycolipid biosynthesis; lipid IV(A) biosynthesis; lipid IV(A) from (3R)-3-hydroxytetradecanoyl-[acyl-carrier-protein] and UDP-N-acetyl-alpha-D-glucosamine: step 4/6. Functionally, hydrolyzes the pyrophosphate bond of UDP-2,3-diacylglucosamine to yield 2,3-diacylglucosamine 1-phosphate (lipid X) and UMP by catalyzing the attack of water at the alpha-P atom. Involved in the biosynthesis of lipid A, a phosphorylated glycolipid that anchors the lipopolysaccharide to the outer membrane of the cell. The chain is UDP-2,3-diacylglucosamine hydrolase from Pseudomonas entomophila (strain L48).